We begin with the raw amino-acid sequence, 675 residues long: UvrABC system protein B (675 aa).

Positions 30–417 (SGIEQGNRNQ…SDQIVEQVVR (388 aa)) constitute a Helicase ATP-binding domain. Position 43–50 (43–50 (GVTGSGKT)) interacts with ATP. The Beta-hairpin motif lies at 96–119 (YYDYYQPEAYVPSSDTFIEKDAAI). The region spanning 434–601 (QVDDVLSEIN…AVRQKVKEID (168 aa)) is the Helicase C-terminal domain. Residues 637–672 (AKHMSKLEKEMLKASKELQFEQAARLRDEILRLKAQ) form the UVR domain.

It belongs to the UvrB family. Forms a heterotetramer with UvrA during the search for lesions. Interacts with UvrC in an incision complex.

The protein resides in the cytoplasm. Its function is as follows. The UvrABC repair system catalyzes the recognition and processing of DNA lesions. A damage recognition complex composed of 2 UvrA and 2 UvrB subunits scans DNA for abnormalities. Upon binding of the UvrA(2)B(2) complex to a putative damaged site, the DNA wraps around one UvrB monomer. DNA wrap is dependent on ATP binding by UvrB and probably causes local melting of the DNA helix, facilitating insertion of UvrB beta-hairpin between the DNA strands. Then UvrB probes one DNA strand for the presence of a lesion. If a lesion is found the UvrA subunits dissociate and the UvrB-DNA preincision complex is formed. This complex is subsequently bound by UvrC and the second UvrB is released. If no lesion is found, the DNA wraps around the other UvrB subunit that will check the other stand for damage. In Acinetobacter baylyi (strain ATCC 33305 / BD413 / ADP1), this protein is UvrABC system protein B.